A 215-amino-acid polypeptide reads, in one-letter code: RNA pyrophosphohydrolase (215 aa).

The Nudix hydrolase domain occupies 6–149 (GFRPNVGIIL…KRDVYQLALT (144 aa)). A Nudix box motif is present at residues 38–59 (GGIKYGETPMQAMYRELHEETG).

The protein belongs to the Nudix hydrolase family. RppH subfamily. A divalent metal cation serves as cofactor.

Its function is as follows. Accelerates the degradation of transcripts by removing pyrophosphate from the 5'-end of triphosphorylated RNA, leading to a more labile monophosphorylated state that can stimulate subsequent ribonuclease cleavage. The sequence is that of RNA pyrophosphohydrolase from Burkholderia lata (strain ATCC 17760 / DSM 23089 / LMG 22485 / NCIMB 9086 / R18194 / 383).